The following is a 1409-amino-acid chain: DNA-directed RNA polymerase subunit beta' (1409 aa).

4 residues coordinate Zn(2+): C70, C72, C85, and C88. Residues D461, D463, and D465 each contribute to the Mg(2+) site. Residues C820, C894, C901, and C904 each coordinate Zn(2+).

The protein belongs to the RNA polymerase beta' chain family. The RNAP catalytic core consists of 2 alpha, 1 beta, 1 beta' and 1 omega subunit. When a sigma factor is associated with the core the holoenzyme is formed, which can initiate transcription. The cofactor is Mg(2+). Zn(2+) is required as a cofactor.

It carries out the reaction RNA(n) + a ribonucleoside 5'-triphosphate = RNA(n+1) + diphosphate. DNA-dependent RNA polymerase catalyzes the transcription of DNA into RNA using the four ribonucleoside triphosphates as substrates. This chain is DNA-directed RNA polymerase subunit beta', found in Ralstonia nicotianae (strain ATCC BAA-1114 / GMI1000) (Ralstonia solanacearum).